The chain runs to 430 residues: MTAIAKIYAREILDSRGNPTLEAEVTLENAVCGRAAVPSGASTGTKEAVELRDGDKTRYLGKGVRAAVDNVNGVIAAALVGFDGADQTGLDHRLINLDGTENKGRLGANALLGVSLATAHAVAAARKQPLWMYLSTLGESKVSLPVPMMNIINGGAHADNNVDFQEFMVLPVGFASFSEALRAGTEIFHALKSVLKGQGLSTAVGDEGGFAPDLRSNVEALDAILEAIGRAGYIAGEDVLLGLDVASSEFRDNGKYNLVGENKRLTSEQFVDFLDDWVTQYPIISIEDGLAEDDWAGWKQLTERIGHKVQLVGDDLFVTNPKVFQEGITSGIANAILIKLNQIGTLTETLESIAMAHRAQYAAIVSHRSGETEDTSIADIAVATTATQIKTGSLCRSDRVAKYNQLLRIEQALGVGARYAGRDAFVSLKS.

Position 165 (glutamine 165) interacts with (2R)-2-phosphoglycerate. Residue glutamate 207 is the Proton donor of the active site. Mg(2+) contacts are provided by aspartate 244, glutamate 287, and aspartate 314. (2R)-2-phosphoglycerate is bound by residues lysine 339, arginine 368, serine 369, and lysine 390. The active-site Proton acceptor is lysine 339.

This sequence belongs to the enolase family. Component of the RNA degradosome, a multiprotein complex involved in RNA processing and mRNA degradation. The cofactor is Mg(2+).

It localises to the cytoplasm. The protein localises to the secreted. It is found in the cell surface. It carries out the reaction (2R)-2-phosphoglycerate = phosphoenolpyruvate + H2O. It functions in the pathway carbohydrate degradation; glycolysis; pyruvate from D-glyceraldehyde 3-phosphate: step 4/5. Its function is as follows. Catalyzes the reversible conversion of 2-phosphoglycerate (2-PG) into phosphoenolpyruvate (PEP). It is essential for the degradation of carbohydrates via glycolysis. The protein is Enolase of Xylella fastidiosa (strain 9a5c).